The sequence spans 491 residues: Glutamate--tRNA ligase (491 aa).

A 'HIGH' region motif is present at residues 10 to 20 (PSPTGYLHIGG). A 'KMSKS' region motif is present at residues 243 to 247 (KISKR). Lysine 246 provides a ligand contact to ATP.

This sequence belongs to the class-I aminoacyl-tRNA synthetase family. Glutamate--tRNA ligase type 1 subfamily. In terms of assembly, monomer.

It localises to the cytoplasm. The enzyme catalyses tRNA(Glu) + L-glutamate + ATP = L-glutamyl-tRNA(Glu) + AMP + diphosphate. In terms of biological role, catalyzes the attachment of glutamate to tRNA(Glu) in a two-step reaction: glutamate is first activated by ATP to form Glu-AMP and then transferred to the acceptor end of tRNA(Glu). The polypeptide is Glutamate--tRNA ligase (Desulfotalea psychrophila (strain LSv54 / DSM 12343)).